A 92-amino-acid chain; its full sequence is Large ribosomal subunit protein bL34m (92 aa).

Residues 1–46 (MALLAGSLLGPTSRSAALLGGRWLQPRAWLGFPDAWGLPTPQQARG) constitute a mitochondrion transit peptide. A compositionally biased stretch (polar residues) spans 40 to 57 (TPQQARGKSRGNEYQPSN). The tract at residues 40–63 (TPQQARGKSRGNEYQPSNIKRKNK) is disordered. Residue Ser71 is modified to Phosphoserine.

Belongs to the bacterial ribosomal protein bL34 family. In terms of assembly, component of the mitochondrial ribosome large subunit (39S) which comprises a 16S rRNA and about 50 distinct proteins.

Its subcellular location is the mitochondrion. In Macaca fascicularis (Crab-eating macaque), this protein is Large ribosomal subunit protein bL34m (MRPL34).